A 942-amino-acid polypeptide reads, in one-letter code: Netrin receptor UNC5B-b (942 aa).

An N-terminal signal peptide occupies residues 1–30; that stretch reads MYLSRIPGGAALAALLVALLLCCNFPPSIA. Residues 31 to 380 are Extracellular-facing; it reads GIEYSDVLPD…LESTGDVALY (350 aa). An Ig-like domain is found at 51–148; the sequence is PHFLLEPEDA…AGTTKSKRSY (98 aa). 9 cysteine pairs are disulfide-bonded: C72/C133, C84/C131, C177/C228, C261/C298, C265/C302, C276/C288, C317/C351, C321/C356, and C329/C341. The 96-residue stretch at 150 to 245 folds into the Ig-like C2-type domain; sequence RIAYLRKNFD…KRRSTTATVI (96 aa). A glycan (N-linked (GlcNAc...) asparagine) is linked at N225. TSP type-1 domains lie at 249-303 and 305-357; these read NGGW…TMCP and DGGW…GLCM. Residue N350 is glycosylated (N-linked (GlcNAc...) asparagine). A helical transmembrane segment spans residues 381 to 401; the sequence is AGLVVAIFIIIILLMAVGIVV. At 402–942 the chain is on the cytoplasmic side; that stretch reads YRRNCREFDT…MLVMATDGDC (541 aa). Residues 541–684 form the ZU5 domain; it reads NSVTGTFGSL…LGTYAFVGES (144 aa). A UPA domain region spans residues 687–835; sequence RSAIKRLQLA…LEENVKSFDP (149 aa). The Death domain occupies 863–940; sequence ICNSLDAPNS…EMMLVMATDG (78 aa).

The protein belongs to the unc-5 family. Interacts (via extracellular domain) with flrt3 (via extracellular domain). Interacts with rnd1.

Its subcellular location is the cell membrane. Functionally, plays a role in cell-cell adhesion during embryonic development. Receptor for netrin required for axon guidance. Mediates axon repulsion of neuronal growth cones in the developing nervous system upon ligand binding. The protein is Netrin receptor UNC5B-b of Xenopus laevis (African clawed frog).